A 67-amino-acid chain; its full sequence is Beta-defensin 103A (67 aa).

An N-terminal signal peptide occupies residues 1–22; that stretch reads MRIHFLLFALLFLFLMPVPGNG. 3 disulfide bridges follow: Cys-33–Cys-62, Cys-40–Cys-55, and Cys-45–Cys-63.

Belongs to the beta-defensin family.

It localises to the secreted. Exhibits antimicrobial activity against Gram-positive and Gram-negative bacteria. This chain is Beta-defensin 103A (DEFB103A), found in Equus caballus (Horse).